A 116-amino-acid chain; its full sequence is Large ribosomal subunit protein uL18 (116 aa).

Belongs to the universal ribosomal protein uL18 family. As to quaternary structure, part of the 50S ribosomal subunit; part of the 5S rRNA/L5/L18/L25 subcomplex. Contacts the 5S and 23S rRNAs.

Functionally, this is one of the proteins that bind and probably mediate the attachment of the 5S RNA into the large ribosomal subunit, where it forms part of the central protuberance. This is Large ribosomal subunit protein uL18 from Psychromonas ingrahamii (strain DSM 17664 / CCUG 51855 / 37).